The sequence spans 171 residues: uncharacterized protein (171 aa).

This is an uncharacterized protein from Orgyia pseudotsugata multicapsid polyhedrosis virus (OpMNPV).